A 491-amino-acid chain; its full sequence is Delayed-rectifier potassium channel regulatory subunit KCNS3 (491 aa).

The Cytoplasmic segment spans residues 1–182 (MVFGEFFHRP…IRMENPAYCL (182 aa)). The chain crosses the membrane as a helical span at residues 183–204 (SAKLIAISSLSVVLASIVAMCV). At 205–220 (HSMSEFQNEDGEVDDP) the chain is on the extracellular side. The chain crosses the membrane as a helical span at residues 221 to 243 (VLEGVEIACIAWFTGELAIRLVA). Topologically, residues 244–254 (APSQKKFWKNP) are cytoplasmic. The helical transmembrane segment at 255 to 275 (LNIIDFVSIIPFYATLAVDTK) threads the bilayer. Residues 276–285 (EEESEDIENM) are Extracellular-facing. Residues 286-306 (GKVVQILRLMRIFRILKLARH) form a helical; Voltage-sensor membrane-spanning segment. The Cytoplasmic segment spans residues 307-321 (SVGLRSLGATLRHSY). The chain crosses the membrane as a helical span at residues 322–343 (HEVGLLLLFLSVGISIFSVLIY). The Extracellular portion of the chain corresponds to 344–357 (SVEKDELASSLTSI). Positions 358-369 (PICWWWATISMT) form an intramembrane region, helical. The Selectivity filter motif lies at 370 to 375 (TVGYGD). Residues 370–377 (TVGYGDTH) lie within the membrane without spanning it. Residues 378–384 (PVTLAGK) are Extracellular-facing. The chain crosses the membrane as a helical span at residues 385–413 (IIASTCIICGILVVALPITIIFNKFSKYY). At 414–491 (QKQKDMDVDQ…TASLENCTAK (78 aa)) the chain is on the cytoplasmic side.

It belongs to the potassium channel family. S (TC 1.A.1.2) subfamily. Kv9.3/KCNS3 sub-subfamily. As to quaternary structure, heterotetramer with KCNB1. Does not form homomultimers. As to expression, expressed in myocytes. Detected in lung, spleen, brain and heart.

The protein localises to the cell membrane. In terms of biological role, potassium channel regulatory subunit that modulates the delayed rectifier potassium channel activity of KCNB1 by namely slowing down the deactivation and inactivation time constants. While it does not form functional channel on its own, it can form functional heterotetrameric channels with KCNB1. This is Delayed-rectifier potassium channel regulatory subunit KCNS3 from Rattus norvegicus (Rat).